The sequence spans 537 residues: Cytochrome P450 734A5 (537 aa).

The helical transmembrane segment at 13-33 (GAAAVAVAAAAAWVAVYAAAA) threads the bilayer. Cys480 serves as a coordination point for heme.

It belongs to the cytochrome P450 family. Heme serves as cofactor. As to expression, exclusively expressed in roots.

The protein localises to the membrane. Functionally, cytochrome P450 probably involved in brassinosteroids (BRs) inactivation and regulation of BRs homeostasis. This is Cytochrome P450 734A5 (CYP734A5) from Oryza sativa subsp. japonica (Rice).